The chain runs to 283 residues: Peroxisomal protein 2 (283 aa).

Positions 281-283 match the Peroxisomal target signal 1 (PTS1) motif; the sequence is VKL.

Belongs to the PXP2 family.

Its subcellular location is the peroxisome matrix. The protein localises to the cytoplasm. It localises to the cytosol. In terms of biological role, probably involved in peroxisome formation or maintenance as well as in amino acid metabolism. The sequence is that of Peroxisomal protein 2 from Saccharomyces cerevisiae (strain ATCC 204508 / S288c) (Baker's yeast).